Reading from the N-terminus, the 247-residue chain is Protein GrpE (247 aa).

The segment covering glutamine 31–valine 49 has biased composition (basic and acidic residues). Positions glutamine 31 to histidine 79 are disordered. Residues lysine 50 to lysine 68 are compositionally biased toward low complexity.

This sequence belongs to the GrpE family. Homodimer.

The protein resides in the cytoplasm. Its function is as follows. Participates actively in the response to hyperosmotic and heat shock by preventing the aggregation of stress-denatured proteins, in association with DnaK and GrpE. It is the nucleotide exchange factor for DnaK and may function as a thermosensor. Unfolded proteins bind initially to DnaJ; upon interaction with the DnaJ-bound protein, DnaK hydrolyzes its bound ATP, resulting in the formation of a stable complex. GrpE releases ADP from DnaK; ATP binding to DnaK triggers the release of the substrate protein, thus completing the reaction cycle. Several rounds of ATP-dependent interactions between DnaJ, DnaK and GrpE are required for fully efficient folding. The chain is Protein GrpE from Onion yellows phytoplasma (strain OY-M).